The chain runs to 428 residues: MGNCHTVGPNEALVVSGGCCGSDYKQYVFGGWAWAWWCISDTQRISLEIMTLQPRCEDVETAEGVALTVTGVAQVKIMTEKELLAVACEQFLGKSVQDIKNVVLQTLEGHLRSILGTLTVEQIYQDRDQFAKLVREVAAPDVGRMGIEILSFTIKDVYDKVDYLSSLGKTQTAVVQRDADIGVAEAERDAGIREAECKKEMLDVKFMADTKIADSKRAFELQKSAFSEEVNIKTAEAQLAYELQGAREQQKIRQEEIEIEVVQRKKQIAVEAQEILRTDKELIATVRCPAEAEAHRIQQIAEGEKVKQVLLAQAEAEKIRKIGEAEAAVIEARGKAEAERMKLKAEAYQKYGDAAKMALVLDALPRIAAKIAAPLTKVDEIVVLSGDNSKVTSEVNRLLAELPASVHALTGVDLSKIPLIKKATGAQV.

The N-myristoyl glycine moiety is linked to residue Gly-2. Residue Cys-4 is the site of S-palmitoyl cysteine; by ZDHHC5 attachment. Cys-19 carries S-palmitoyl cysteine lipidation. Residue Cys-20 is the site of S-palmitoyl cysteine; by ZDHHC5 attachment. At Ser-405 the chain carries Phosphoserine.

This sequence belongs to the band 7/mec-2 family. Flotillin subfamily. As to quaternary structure, heterooligomeric complex of flotillin-1 and flotillin-2 and caveolin-1 and caveolin-2. Interacts with ECPAS. In terms of processing, ZDHHC5-catalyzed palmitoylation may be required for the formation of higher-order complexes and for neurite outgrowth in cultured neural stem cells.

The protein localises to the cell membrane. It is found in the membrane. It localises to the caveola. The protein resides in the endosome. In terms of biological role, may act as a scaffolding protein within caveolar membranes, functionally participating in formation of caveolae or caveolae-like vesicles. May be involved in epidermal cell adhesion and epidermal structure and function. The polypeptide is Flotillin-2 (FLOT2) (Bos taurus (Bovine)).